The sequence spans 353 residues: Photosystem II D2 protein (353 aa).

N-acetylthreonine is present on Thr-2. Thr-2 is modified (phosphothreonine). A helical membrane pass occupies residues 41–61 (CAYFAVGGWFTGTTFVTSWYT). His-118 is a binding site for chlorophyll a. Residues 125 to 141 (GFMLRQFELARSVQLRP) form a helical membrane-spanning segment. Residues Gln-130 and Asn-143 each contribute to the pheophytin a site. The chain crosses the membrane as a helical span at residues 153–166 (VFVSVFLIYPLGQS). Position 198 (His-198) interacts with chlorophyll a. Residues 208–228 (AALLCAIHGATVENTLFEDGD) form a helical membrane-spanning segment. His-215 and Phe-262 together coordinate a plastoquinone. His-215 contacts Fe cation. His-269 contacts Fe cation. The chain crosses the membrane as a helical span at residues 279–295 (GLWMSALGVVGLALNLR).

It belongs to the reaction center PufL/M/PsbA/D family. PSII is composed of 1 copy each of membrane proteins PsbA, PsbB, PsbC, PsbD, PsbE, PsbF, PsbH, PsbI, PsbJ, PsbK, PsbL, PsbM, PsbT, PsbX, PsbY, PsbZ, Psb30/Ycf12, at least 3 peripheral proteins of the oxygen-evolving complex and a large number of cofactors. It forms dimeric complexes. Requires The D1/D2 heterodimer binds P680, chlorophylls that are the primary electron donor of PSII, and subsequent electron acceptors. It shares a non-heme iron and each subunit binds pheophytin, quinone, additional chlorophylls, carotenoids and lipids. There is also a Cl(-1) ion associated with D1 and D2, which is required for oxygen evolution. The PSII complex binds additional chlorophylls, carotenoids and specific lipids. as cofactor.

The protein resides in the plastid. It localises to the chloroplast thylakoid membrane. The catalysed reaction is 2 a plastoquinone + 4 hnu + 2 H2O = 2 a plastoquinol + O2. Its function is as follows. Photosystem II (PSII) is a light-driven water:plastoquinone oxidoreductase that uses light energy to abstract electrons from H(2)O, generating O(2) and a proton gradient subsequently used for ATP formation. It consists of a core antenna complex that captures photons, and an electron transfer chain that converts photonic excitation into a charge separation. The D1/D2 (PsbA/PsbD) reaction center heterodimer binds P680, the primary electron donor of PSII as well as several subsequent electron acceptors. D2 is needed for assembly of a stable PSII complex. The protein is Photosystem II D2 protein of Nicotiana tabacum (Common tobacco).